The sequence spans 156 residues: Nucleoredoxin-like protein 2 (156 aa).

One can recognise a Thioredoxin domain in the interval 9 to 147 (RLVTREGTVV…LACFQNWVEA (139 aa)).

The protein belongs to the nucleoredoxin family. In terms of tissue distribution, both isoforms are expressed in retina, in the photoreceptor layer, and throughout the olfactory sensory neuron layer of the nasal epithelium, in neurons. Also expressed at low levels in brain and testis.

May be involved in the maintenance of both the function and the viability of sensory neurons, including photoreceptors and olfactory neurons. In the retina, isoform 1 may be required for rod function and isoform 2 for cone viability and function. The protein is Nucleoredoxin-like protein 2 (Nxnl2) of Mus musculus (Mouse).